A 953-amino-acid chain; its full sequence is Ribonuclease E (953 aa).

2 disordered regions span residues 1 to 23 (MIDGAPPSDPPEPSQHEELPDRL) and 118 to 314 (VAPQ…RRRP). The segment covering 14 to 23 (SQHEELPDRL) has biased composition (basic and acidic residues). The segment covering 127-150 (LADDEDVDDGPDYVADDSDADDEG) has biased composition (acidic residues). Basic residues predominate over residues 157–169 (NRRRRRGRRGRGR). Polar residues predominate over residues 183 to 193 (DQQSEPRAQQF). The segment covering 199–223 (AETDDGDDRDSEDTEAGDNGEDENG) has biased composition (acidic residues). Residues 230–240 (RRRRRRRRRKS) show a composition bias toward basic residues. Composition is skewed to basic and acidic residues over residues 263–272 (VHERVPRAGD) and 294–311 (TRLEAKRQRRRDGRDAGR). The S1 motif domain maps to 376 to 453 (GNIYLGIVQN…GHKGARLTTQ (78 aa)). The Mg(2+) site is built by Asp647 and Asp691. Zn(2+) contacts are provided by Cys749 and Cys752. Disordered regions lie at residues 766–808 (SAAA…APGE) and 822–953 (LAGR…IRLD). Residues 848 to 915 (DLDDTAQADF…DADVDEEDAA (68 aa)) show a composition bias toward acidic residues.

It belongs to the RNase E/G family. As to quaternary structure, assembles into a homotetramer formed by a dimer of dimers. Interacts with DNA-binding protein HU (hupB). The cofactor is Mg(2+). It depends on Zn(2+) as a cofactor.

The protein localises to the cytoplasm. It catalyses the reaction Endonucleolytic cleavage of single-stranded RNA in A- and U-rich regions.. In terms of biological role, endoribonuclease that plays a central role in RNA processing and decay. Plays a major role in pre-16S rRNA maturation, probably generating the mature 5'-end, and a minor role in pre-5S and pre-23S rRNA maturation. Probably also processes tRNA. RNase E and HupB jointly contribute to cellular adaptation to changing growth conditions and survival during antibiotic treatment and in the host. The protein is Ribonuclease E of Mycobacterium tuberculosis (strain ATCC 25618 / H37Rv).